The following is a 217-amino-acid chain: Octanoyltransferase (217 aa).

The region spanning 33–208 (SSSQDEIWLV…KLCSLLGIAS (176 aa)) is the BPL/LPL catalytic domain. Substrate is bound by residues 72–79 (RGGQVTYH), 139–141 (SIG), and 152–154 (GLA). The active-site Acyl-thioester intermediate is Cys-170.

Belongs to the LipB family.

It localises to the cytoplasm. The catalysed reaction is octanoyl-[ACP] + L-lysyl-[protein] = N(6)-octanoyl-L-lysyl-[protein] + holo-[ACP] + H(+). Its pathway is protein modification; protein lipoylation via endogenous pathway; protein N(6)-(lipoyl)lysine from octanoyl-[acyl-carrier-protein]: step 1/2. In terms of biological role, catalyzes the transfer of endogenously produced octanoic acid from octanoyl-acyl-carrier-protein onto the lipoyl domains of lipoate-dependent enzymes. Lipoyl-ACP can also act as a substrate although octanoyl-ACP is likely to be the physiological substrate. The chain is Octanoyltransferase from Pseudoalteromonas atlantica (strain T6c / ATCC BAA-1087).